The sequence spans 211 residues: Holliday junction branch migration complex subunit RuvA (211 aa).

Positions 1–64 (MIGRLRGMLV…EDAQLLYGFA (64 aa)) are domain I. Residues 65–143 (NKVERKLFRL…DWQAQQIHLV (79 aa)) form a domain II region. Positions 144–162 (SDDGVIPEQLSAELSQETT) are flexible linker. The tract at residues 163-211 (FVNDNKGDAINALLSLGYKQVQADKAVKSVYNRGMSSENIIRDALKSMI) is domain III.

It belongs to the RuvA family. Homotetramer. Forms an RuvA(8)-RuvB(12)-Holliday junction (HJ) complex. HJ DNA is sandwiched between 2 RuvA tetramers; dsDNA enters through RuvA and exits via RuvB. An RuvB hexamer assembles on each DNA strand where it exits the tetramer. Each RuvB hexamer is contacted by two RuvA subunits (via domain III) on 2 adjacent RuvB subunits; this complex drives branch migration. In the full resolvosome a probable DNA-RuvA(4)-RuvB(12)-RuvC(2) complex forms which resolves the HJ.

It localises to the cytoplasm. The RuvA-RuvB-RuvC complex processes Holliday junction (HJ) DNA during genetic recombination and DNA repair, while the RuvA-RuvB complex plays an important role in the rescue of blocked DNA replication forks via replication fork reversal (RFR). RuvA specifically binds to HJ cruciform DNA, conferring on it an open structure. The RuvB hexamer acts as an ATP-dependent pump, pulling dsDNA into and through the RuvAB complex. HJ branch migration allows RuvC to scan DNA until it finds its consensus sequence, where it cleaves and resolves the cruciform DNA. This Colwellia psychrerythraea (strain 34H / ATCC BAA-681) (Vibrio psychroerythus) protein is Holliday junction branch migration complex subunit RuvA.